We begin with the raw amino-acid sequence, 65 residues long: Neurotoxin BmK-M3 (65 aa).

Residues 2–64 (RDAYIAKPEN…VPIRVWGKCH (63 aa)) enclose the LCN-type CS-alpha/beta domain. 4 disulfides stabilise this stretch: Cys12–Cys63, Cys16–Cys36, Cys22–Cys46, and Cys26–Cys48.

This sequence belongs to the long (4 C-C) scorpion toxin superfamily. Sodium channel inhibitor family. Alpha subfamily. In terms of tissue distribution, expressed by the venom gland.

It is found in the secreted. Its function is as follows. Binds to sodium channels (Nav) and inhibits the inactivation of the activated channels, thereby blocking neuronal transmission. The protein is Neurotoxin BmK-M3 of Olivierus martensii (Manchurian scorpion).